Reading from the N-terminus, the 503-residue chain is Beta-mannosyltransferase 4 (503 aa).

Topologically, residues 1–24 are cytoplasmic; it reads MKLDTQQISHLLSRQMYHLAPRKK. The chain crosses the membrane as a helical span at residues 25–45; it reads LLIWGGSLGFVLLLLIVASSH. Over 46–503 the chain is Extracellular; the sequence is QRIRSTILHR…QYCQRYGELH (458 aa). N-linked (GlcNAc...) asparagine glycosylation occurs at N468.

This sequence belongs to the BMT family.

The protein localises to the membrane. Functionally, beta-mannosyltransferase involved in cell wall biosynthesis. Responsible for addition of a hexose to the beta-mannose chain. This chain is Beta-mannosyltransferase 4 (BMT4), found in Komagataella phaffii (strain ATCC 76273 / CBS 7435 / CECT 11047 / NRRL Y-11430 / Wegner 21-1) (Yeast).